The chain runs to 519 residues: Probable DNA ligase (519 aa).

Glu-211 serves as a coordination point for ATP. The N6-AMP-lysine intermediate role is filled by Lys-213. ATP-binding residues include Arg-218, Arg-233, Glu-262, Phe-302, Arg-374, and Lys-380.

Belongs to the ATP-dependent DNA ligase family. Mg(2+) serves as cofactor.

It carries out the reaction ATP + (deoxyribonucleotide)n-3'-hydroxyl + 5'-phospho-(deoxyribonucleotide)m = (deoxyribonucleotide)n+m + AMP + diphosphate.. Its function is as follows. DNA ligase that seals nicks in double-stranded DNA during DNA replication, DNA recombination and DNA repair. The chain is Probable DNA ligase from Anaeromyxobacter sp. (strain Fw109-5).